Consider the following 255-residue polypeptide: HLA class II histocompatibility antigen, DQ alpha 2 chain (255 aa).

Positions 1–23 (MILNKALLLGALALTAVMSPCGG) are cleaved as a signal peptide. The alpha-1 stretch occupies residues 24 to 110 (EDIVADHVAS…RQSNSTAATN (87 aa)). Topologically, residues 24–217 (EDIVADHVAS…IPAPMSELTE (194 aa)) are extracellular. Residues Asn-104 and Asn-144 are each glycosylated (N-linked (GlcNAc...) asparagine). The tract at residues 111-204 (EVPEVTVFSK…GLDEPLLKHW (94 aa)) is alpha-2. In terms of domain architecture, Ig-like C1-type spans 113 to 205 (PEVTVFSKFP…LDEPLLKHWE (93 aa)). Cysteines 133 and 189 form a disulfide. The segment at 205–217 (EPEIPAPMSELTE) is connecting peptide. The chain crosses the membrane as a helical span at residues 218–240 (TLVCALGLSVGLMGIVVGTVFII). Residues 241 to 255 (QGLRSVGASRHQGLL) are Cytoplasmic-facing.

This sequence belongs to the MHC class II family. As to quaternary structure, heterodimer of an alpha and a beta subunit; also referred as MHC class II molecule. Dimer formation with HLA-DQB2, but not with HLA-DQB1, is required for efficient exit from the endoplasmic reticulum (ER). In the ER, forms a heterononamer; 3 MHC class II molecules bind to a CD74 homotrimer (also known as invariant chain or HLA class II histocompatibility antigen gamma chain). In the endosomal/lysosomal system; CD74 undergoes sequential degradation by various proteases; leaving a small fragment termed CLIP on each MHC class II molecule. MHC class II molecule interacts with HLA_DM, and HLA_DO in B-cells, in order to release CLIP and facilitate the binding of antigenic peptides. Association with HLA-DMA also occurs in skin Langerhans cells, in post-Golgi compartments. Restricted to skin Langerhans cells, although some expression at low levels may occur at the surface of B lymphoblastoid cells.

It localises to the cell membrane. It is found in the endoplasmic reticulum membrane. The protein localises to the golgi apparatus. The protein resides in the trans-Golgi network membrane. Its subcellular location is the endosome membrane. It localises to the lysosome membrane. Its function is as follows. Binds peptides derived from antigens that access the endocytic route of antigen presenting cells (APC) and presents them on the cell surface for recognition by the CD4 T-cells. The peptide binding cleft accommodates peptides of 10-30 residues. The peptides presented by MHC class II molecules are generated mostly by degradation of proteins that access the endocytic route, where they are processed by lysosomal proteases and other hydrolases. Exogenous antigens that have been endocytosed by the APC are thus readily available for presentation via MHC II molecules, and for this reason this antigen presentation pathway is usually referred to as exogenous. As membrane proteins on their way to degradation in lysosomes as part of their normal turn-over are also contained in the endosomal/lysosomal compartments, exogenous antigens must compete with those derived from endogenous components. Autophagy is also a source of endogenous peptides, autophagosomes constitutively fuse with MHC class II loading compartments. In addition to APCs, other cells of the gastrointestinal tract, such as epithelial cells, express MHC class II molecules and CD74 and act as APCs, which is an unusual trait of the GI tract. To produce a MHC class II molecule that presents an antigen, three MHC class II molecules (heterodimers of an alpha and a beta chain) associate with a CD74 trimer in the ER to form a heterononamer. Soon after the entry of this complex into the endosomal/lysosomal system where antigen processing occurs, CD74 undergoes a sequential degradation by various proteases, including CTSS and CTSL, leaving a small fragment termed CLIP (class-II-associated invariant chain peptide). The removal of CLIP is facilitated by HLA-DM via direct binding to the alpha-beta-CLIP complex so that CLIP is released. HLA-DM stabilizes MHC class II molecules until primary high affinity antigenic peptides are bound. The MHC II molecule bound to a peptide is then transported to the cell membrane surface. In B-cells, the interaction between HLA-DM and MHC class II molecules is regulated by HLA-DO. Primary dendritic cells (DCs) also to express HLA-DO. Lysosomal microenvironment has been implicated in the regulation of antigen loading into MHC II molecules, increased acidification produces increased proteolysis and efficient peptide loading. The sequence is that of HLA class II histocompatibility antigen, DQ alpha 2 chain (HLA-DQA2) from Homo sapiens (Human).